A 732-amino-acid polypeptide reads, in one-letter code: Glycine--tRNA ligase (732 aa).

The N-terminal 27 residues, 1–27, are a transit peptide targeting the mitochondrion; that stretch reads MRHVLSLVYKCSVFSKQVTVFSNHLRL. The WHEP-TRS domain maps to 61–117; the sequence is ILAPLRANVKEQGDLVRKLKEEKAPEIDIKKAVAELKTRKKILEDKELSLAPAEDLF. Glycine is bound at residue E297. ATP is bound by residues 329–331 and 340–341; these read RNE and RV. E348 provides a ligand contact to glycine. 453–454 lines the ATP pocket; the sequence is EC. Residue 572-574 coordinates glycine; the sequence is EPS. R579 lines the ATP pocket.

The protein belongs to the class-II aminoacyl-tRNA synthetase family. Homodimer.

It is found in the mitochondrion. Its subcellular location is the cytoplasm. The protein localises to the cell projection. The protein resides in the axon. It carries out the reaction tRNA(Gly) + glycine + ATP = glycyl-tRNA(Gly) + AMP + diphosphate. The catalysed reaction is 2 ATP + H(+) = P(1),P(4)-bis(5'-adenosyl) tetraphosphate + diphosphate. Functionally, catalyzes the ATP-dependent ligation of glycine to the 3'-end of its cognate tRNA, via the formation of an aminoacyl-adenylate intermediate (Gly-AMP). Also produces diadenosine tetraphosphate (Ap4A), a universal pleiotropic signaling molecule needed for cell regulation pathways, by direct condensation of 2 ATPs. Thereby, may play a special role in Ap4A homeostasis. Required for terminal arborization of both dendrites and axons during development. The polypeptide is Glycine--tRNA ligase (Bombyx mori (Silk moth)).